The chain runs to 299 residues: MAEFPASLLILNGKSTDNLPLREAIMLLREEGMTIHVRVTWEKGDAARYVEEARKLGVATVIAGGGDGTINEVSTALIQCEGDDIPALGILPLGTANDFATSVGIPEALDKALKLAIAGNAIAIDMAQVNKQTCFINMATGGFGTRITTETPEKLKAALGGVSYIIHGLMRMDTLQPDRCEIRGENFHWQGDGLVIGIGNGRQAGGGQQLCPNALINDGLLQLRIFTGDEILPALVSTLKSDEDNPNIIEGASSWFDIQAPHEITFNLDGEPLSGQNFHIEILPAALRCRLPPDCPLLR.

Residues 2-133 (AEFPASLLIL…IDMAQVNKQT (132 aa)) enclose the DAGKc domain. ATP is bound by residues threonine 40, 66–72 (GDGTINE), and threonine 95. Positions 215, 218, and 220 each coordinate Mg(2+). Residue glutamate 271 is the Proton acceptor of the active site.

It belongs to the diacylglycerol/lipid kinase family. YegS lipid kinase subfamily. Requires Mg(2+) as cofactor. Ca(2+) serves as cofactor.

It is found in the cytoplasm. In terms of biological role, probably phosphorylates lipids; the in vivo substrate is unknown. In Shigella dysenteriae serotype 1 (strain Sd197), this protein is Probable lipid kinase YegS.